The sequence spans 138 residues: Large ribosomal subunit protein bL19 (138 aa).

It belongs to the bacterial ribosomal protein bL19 family.

In terms of biological role, this protein is located at the 30S-50S ribosomal subunit interface and may play a role in the structure and function of the aminoacyl-tRNA binding site. The sequence is that of Large ribosomal subunit protein bL19 from Rickettsia conorii (strain ATCC VR-613 / Malish 7).